A 338-amino-acid polypeptide reads, in one-letter code: S-adenosylmethionine:tRNA ribosyltransferase-isomerase (338 aa).

Belongs to the QueA family. In terms of assembly, monomer.

It localises to the cytoplasm. It catalyses the reaction 7-aminomethyl-7-carbaguanosine(34) in tRNA + S-adenosyl-L-methionine = epoxyqueuosine(34) in tRNA + adenine + L-methionine + 2 H(+). Its pathway is tRNA modification; tRNA-queuosine biosynthesis. Transfers and isomerizes the ribose moiety from AdoMet to the 7-aminomethyl group of 7-deazaguanine (preQ1-tRNA) to give epoxyqueuosine (oQ-tRNA). The sequence is that of S-adenosylmethionine:tRNA ribosyltransferase-isomerase from Francisella tularensis subsp. holarctica (strain FTNF002-00 / FTA).